A 485-amino-acid chain; its full sequence is Cobyric acid synthase (485 aa).

The 199-residue stretch at 250–448 (TQTVAVIAYP…LHGMFEDPRV (199 aa)) folds into the GATase cobBQ-type domain. Cys334 acts as the Nucleophile in catalysis. His440 is a catalytic residue.

This sequence belongs to the CobB/CobQ family. CobQ subfamily.

It participates in cofactor biosynthesis; adenosylcobalamin biosynthesis. Its function is as follows. Catalyzes amidations at positions B, D, E, and G on adenosylcobyrinic A,C-diamide. NH(2) groups are provided by glutamine, and one molecule of ATP is hydrogenolyzed for each amidation. This Polaromonas naphthalenivorans (strain CJ2) protein is Cobyric acid synthase.